The primary structure comprises 448 residues: Probable metal transport system membrane protein CPn_0347/CP_0413/CPj0347/CpB0354 (448 aa).

Helical transmembrane passes span Phe-15–Ser-35, Ala-47–Ala-67, Ile-69–Phe-89, Ser-100–Val-120, Phe-144–Trp-164, Leu-193–Ser-213, Ile-233–Val-253, and Leu-270–Phe-290.

It belongs to the ABC-3 integral membrane protein family.

It is found in the cell inner membrane. Its function is as follows. Part of an ATP-driven transport system CPn_0346/CPn_0347/CPn_0348/CPn_0349 for a metal. This Chlamydia pneumoniae (Chlamydophila pneumoniae) protein is Probable metal transport system membrane protein CPn_0347/CP_0413/CPj0347/CpB0354.